We begin with the raw amino-acid sequence, 920 residues long: Dynamin-2B (920 aa).

Position 1 is an N-acetylmethionine (Met-1). One can recognise a Dynamin-type G domain in the interval 35-303 (PATSLNVVAL…IRSRMKLRLP (269 aa)). The tract at residues 45–52 (GNVGAGKS) is G1 motif. Residue 45 to 53 (GNVGAGKSA) coordinates GTP. A G2 motif region spans residues 71–73 (ATR). Residues 143 to 146 (DLPG) are G3 motif. A G4 motif region spans residues 204-207 (SKID). 204–210 (SKIDQAA) is a binding site for GTP. Residues 238-241 (ALIG) form a G5 motif region. GTP is bound at residue 246 to 249 (IASA). A compositionally biased stretch (basic and acidic residues) spans 507-522 (RREEELKGRSSKKGQD). Disordered regions lie at residues 507–577 (RREE…TAGP) and 632–657 (IEEI…PDSK). A compositionally biased stretch (polar residues) spans 523–545 (AEQSLLNRATSPQPDGPSSTGGS). Basic and acidic residues-rich tracts occupy residues 548-567 (SLRD…KETP) and 641-652 (EKSKSSKDKKSN). One can recognise a PH domain in the interval 579–703 (GEITAGYLMK…WINKLQKVIQ (125 aa)). Positions 737 to 830 (LRWMSQEVRG…QLSIHDNRAA (94 aa)) constitute a GED domain. Residues 747-761 (YVEAVLNSLAANVPK) are important for homodimerization. Positions 788 to 812 (NERIESLIQEDQNVKRRRDRYQKQS) form a coiled coil. The segment at 828 to 920 (RAAAASSWSD…PPQSGSSYRY (93 aa)) is disordered. Positions 833–849 (SSWSDNSGTESSPRTNG) are enriched in polar residues.

It belongs to the TRAFAC class dynamin-like GTPase superfamily. Dynamin/Fzo/YdjA family. Interacts with DRP1A at the plasma membrane and in forming clathrin-coated vesicles (CCV). Ubiquitous. Preferentially expressed in siliques.

The protein resides in the cytoplasm. The protein localises to the cytoskeleton. Its subcellular location is the cytoplasmic vesicle. It localises to the clathrin-coated vesicle. It is found in the cell membrane. The catalysed reaction is GTP + H2O = GDP + phosphate + H(+). Its function is as follows. Putative microtubule-associated force-producing protein, able to bind and hydrolyze GTP. Collaboratively with DRP1A, participates in clathrin-coated vesicle formation during endocytosis. With DRP1A and PIP5K3, required for the precise coordination of polar ARAC3/ROP6 and ARAC4/ROP2 placement and subsequent root hair positioning during planar polarity formation in root hair-forming cells. This Arabidopsis thaliana (Mouse-ear cress) protein is Dynamin-2B.